Consider the following 1097-residue polypeptide: Protein toll (1097 aa).

A signal peptide spans 1 to 27 (MSRLKAASELALLVIILQLLQWPGSEA). Over 28-807 (SFGRDACSEM…ICPAEKGVFI (780 aa)) the chain is Extracellular. 3 disulfides stabilise this stretch: Cys-34–Cys-45, Cys-43–Cys-56, and Cys-79–Cys-107. N-linked (GlcNAc...) asparagine glycans are attached at residues Asn-80, Asn-140, and Asn-175. LRR repeat units follow at residues 175 to 195 (NLSH…LFDD), 198 to 219 (NLES…IFGK), 222 to 243 (KLKQ…DFEG), 246 to 267 (SVLG…VFAH), 270 to 291 (NVTD…LFDH), 294 to 314 (HLNE…PSRL), 320 to 340 (ELQI…LFEH), 343 to 364 (QITN…LLEH), 367 to 388 (NLLS…LFAH), 391 to 412 (NLTD…IFSN), 415 to 436 (NLVT…AFVS), 439 to 460 (GLRH…LDIM), 474 to 495 (GLLT…WKNT), 498 to 521 (QLRE…AFLS), and 523 to 544 (NRLH…EDVH). N-linked (GlcNAc...) asparagine glycosylation is present at Asn-235. N-linked (GlcNAc...) asparagine glycans are attached at residues Asn-270 and Asn-275. N-linked (GlcNAc...) asparagine glycosylation occurs at Asn-346. N-linked (GlcNAc...) asparagine glycosylation is present at Asn-391. Asn-482, Asn-508, and Asn-528 each carry an N-linked (GlcNAc...) asparagine glycan. Residues 561–620 (NPLVCDCTILWFIQLVRGVHKPQYSRQFKLRTDRLVCSQPNVLEGTPVRQIEPQTLICPL) form the LRRCT 1 domain. Disulfide bonds link Cys-565/Cys-597, Cys-567/Cys-618, Cys-631/Cys-637, and Cys-635/Cys-650. Positions 622–663 (FSDDPRERKCPRGCNCHVRTYDKALVINCHSGNLTHVPRLPN) constitute an LRRNT domain. Asn-654, Asn-677, Asn-703, Asn-715, Asn-730, and Asn-738 each carry an N-linked (GlcNAc...) asparagine glycan. 3 LRR repeats span residues 669-690 (QLME…NTPG), 693-713 (SVTS…DQLP), and 715-738 (NLTH…GFLN). Positions 751 to 801 (NPWMCDCTAKPLLLFTQDNFERIGDRNEMMCVNAEMPTRMVELSTNDICPA) constitute an LRRCT 2 domain. 2 disulfides stabilise this stretch: Cys-755–Cys-781 and Cys-757–Cys-799. The chain crosses the membrane as a helical span at residues 808 to 828 (ALAVVIALTGLLAGFTAALYY). At 829–1097 (KFQTEIKIWL…INTNAKQSDV (269 aa)) the chain is on the cytoplasmic side. Residues 857–993 (KKFDAFISYS…WFWDKLRFAL (137 aa)) enclose the TIR domain.

Belongs to the Toll-like receptor family. In terms of assembly, in the absence of ligand, forms a low-affinity disulfide-linked homodimer. In the presence of ligand, crystal structures show one Tl molecule bound to a spaetzle C-106 homodimer. However, the active complex probably consists of two Tl molecules bound to a spaetzle C-106 homodimer. This is supported by in vitro experiments which also show binding of the spaetzle C-106 dimer to 2 Tl receptors. Ligand binding induces conformational changes in the extracellular domain of Tl. This may enable a secondary homodimerization interface at the C-terminus of the Tl extracellular domain. As to expression, in early embryos, concentrated in the pseudocleavage furrows that form transiently between nuclei before cellularization and in the cleavage furrows during cellularization (at protein level). Later, found on cells in the mesectoderm, stomodeum, proctodeum, anterior and posterior midguts, splanchnopleura, salivary gland placode and adjacent to the segmentally repeated tracheal placodes (at protein level). During and after germ band shortening, localized in a number of cell types, including the salivary gland, foregut, hindgut, Malpighian tubules and epidermis (at protein level). In embryos, high expression in M13 with comparatively low expression in M12.

The protein localises to the cell membrane. The protein resides in the cytoplasm. In terms of biological role, receptor for the cleaved activated form of spz, spaetzle C-106. Binding to spaetzle C-106 activates the Toll signaling pathway and induces expression of the antifungal peptide drosomycin. Component of the extracellular signaling pathway that establishes dorsal-ventral polarity in the embryo. Promotes heterophilic cellular adhesion. Involved in synaptic targeting of motoneurons RP5 and V to muscle 12 (M12); functions as a repulsive cue inhibiting motoneuron synapse formation on muscle 13 (M13) to guide RP5 and V to the neighboring M12, where its expression is repressed by tey. May also function in embryonic neuronal survival and the synaptic targeting of SNa motoneurons. This is Protein toll from Drosophila melanogaster (Fruit fly).